The following is a 444-amino-acid chain: Platelet-activating factor acetylhydrolase (444 aa).

The first 21 residues, 1–21 (MLPSKLHALFCLCTCLALVYP), serve as a signal peptide directing secretion. N-linked (GlcNAc...) asparagine glycans are attached at residues asparagine 60 and asparagine 200. The active-site Nucleophile is the serine 274. Active-site charge relay system residues include aspartate 297 and histidine 352. Asparagine 424 and asparagine 434 each carry an N-linked (GlcNAc...) asparagine glycan.

The protein belongs to the AB hydrolase superfamily. Lipase family. N-glycosylated. In terms of tissue distribution, plasma.

The protein resides in the secreted. It is found in the extracellular space. It catalyses the reaction a 1-O-alkyl-2-acetyl-sn-glycero-3-phosphocholine + H2O = a 1-O-alkyl-sn-glycero-3-phosphocholine + acetate + H(+). It carries out the reaction 1-O-decyl-2-acetyl-sn-glycero-3-phosphocholine + H2O = 1-O-decyl-sn-glycero-3-phosphocholine + acetate + H(+). The catalysed reaction is 1-O-dodecyl-2-acetyl-sn-glycero-3-phosphocholine + H2O = 1-O-dodecyl-sn-glycero-3-phosphocholine + acetate + H(+). The enzyme catalyses 1-O-tetradecyl-2-acetyl-sn-glycero-3-phosphocholine + H2O = 1-O-tetradecyl-sn-glycero-3-phosphocholine + acetate + H(+). It catalyses the reaction 1-O-hexadecyl-2-acetyl-sn-glycero-3-phosphocholine + H2O = 1-O-hexadecyl-sn-glycero-3-phosphocholine + acetate + H(+). It carries out the reaction 1-O-octadecyl-2-acetyl-sn-glycero-3-phosphocholine + H2O = 1-O-octadecyl-sn-glycero-3-phosphocholine + acetate + H(+). The catalysed reaction is 1-hexadecanoyl-2-acetyl-sn-glycero-3-phosphocholine + H2O = 1-hexadecanoyl-sn-glycero-3-phosphocholine + acetate + H(+). The enzyme catalyses 1-hexadecanoyl-2-propionyl-sn-glycero-3-phosphocholine + H2O = propanoate + 1-hexadecanoyl-sn-glycero-3-phosphocholine + H(+). It catalyses the reaction 1-hexadecanoyl-2-butanoyl-sn-glycero-3-phosphocholine + H2O = butanoate + 1-hexadecanoyl-sn-glycero-3-phosphocholine + H(+). It carries out the reaction 1-hexadecanoyl-2-pentanoyl-sn-glycero-3-phosphocholine + H2O = pentanoate + 1-hexadecanoyl-sn-glycero-3-phosphocholine + H(+). The catalysed reaction is 1-hexadecanoyl-2-glutaroyl-sn-glycero-3-phosphocholine + H2O = glutarate + 1-hexadecanoyl-sn-glycero-3-phosphocholine + H(+). The enzyme catalyses 1-hexadecanoyl-2-(5-oxopentanoyl)-sn-glycero-3-phosphocholine + H2O = 5-oxopentanoate + 1-hexadecanoyl-sn-glycero-3-phosphocholine + H(+). It catalyses the reaction 1-hexadecanoyl-2-(9-oxononanoyl)-sn-glycero-3-phosphocholine + H2O = 9-oxononanoate + 1-hexadecanoyl-sn-glycero-3-phosphocholine + H(+). It carries out the reaction 1-hexadecanoyl-2-[9-hydroperoxy-(10E-octadecenoyl)]-sn-glycero-3-phosphocholine + H2O = 9-hydroperoxy-10E-octadecenoate + 1-hexadecanoyl-sn-glycero-3-phosphocholine + H(+). The catalysed reaction is 1-hexadecanoyl-2-(10-hydroperoxy-8E-octadecenoyl)-sn-glycero-3-phosphocholine + H2O = 10-hydroperoxy-(8E)-octadecenoate + 1-hexadecanoyl-sn-glycero-3-phosphocholine + H(+). Lipoprotein-associated calcium-independent phospholipase A2 involved in phospholipid catabolism during inflammatory and oxidative stress response. At the lipid-aqueous interface, hydrolyzes the ester bond of fatty acyl group attached at sn-2 position of phospholipids (phospholipase A2 activity). Specifically targets phospholipids with a short-chain fatty acyl group at sn-2 position. Can hydrolyze phospholipids with long fatty acyl chains, only if they carry oxidized functional groups. Hydrolyzes and inactivates platelet-activating factor (PAF, 1-O-alkyl-2-acetyl-sn-glycero-3-phosphocholine), a potent pro-inflammatory signaling lipid that acts through PTAFR on various innate immune cells. Hydrolyzes oxidatively truncated phospholipids carrying an aldehyde group at omega position, preventing their accumulation in low-density lipoprotein (LDL) particles and uncontrolled pro-inflammatory effects. As part of high-density lipoprotein (HDL) particles, can hydrolyze phospholipids having long-chain fatty acyl hydroperoxides at sn-2 position and protect against potential accumulation of these oxylipins in the vascular wall. Catalyzes the release from membrane phospholipids of F2-isoprostanes, lipid biomarkers of cellular oxidative damage. This Bos taurus (Bovine) protein is Platelet-activating factor acetylhydrolase (PLA2G7).